The chain runs to 114 residues: Protein D2 (114 aa).

The protein belongs to the phosphatidylethanolamine-binding protein family.

This chain is Protein D2 (D2), found in Onchocerca volvulus.